The following is a 367-amino-acid chain: Oleoyl-acyl carrier protein thioesterase 2, chloroplastic (367 aa).

Residues 1–48 constitute a chloroplast transit peptide; the sequence is MLKLSCNVTDHIHNLFSNSRRIFVPVHRQTRPISCFQLKKEPLRAILS. Catalysis depends on residues asparagine 263, histidine 265, and cysteine 300.

It belongs to the acyl-ACP thioesterase family.

The protein resides in the plastid. The protein localises to the chloroplast. The enzyme catalyses (9Z)-octadecenoyl-[ACP] + H2O = (9Z)-octadecenoate + holo-[ACP] + H(+). In terms of biological role, plays an essential role in chain termination during de novo fatty acid synthesis. Possesses high thioesterase activity for oleoyl-ACP versus other acyl-ACPs. This chain is Oleoyl-acyl carrier protein thioesterase 2, chloroplastic (FATA2), found in Arabidopsis thaliana (Mouse-ear cress).